A 392-amino-acid polypeptide reads, in one-letter code: MCVSRRRNSGRPILRVRAPHLLRARPHRRSKLKHRRISRKRATLAGSAVVALVAAGFTFQTANASDDVPAFGAKTLSADAAGKLATTLDRDLGADAAGSYYDATAKTLVVNVVDEAGAEQVRQAGGKARIVENSLAELKSARGTLTEKATIPGTSWAVDPVSNKVLVTADSTVDGAAWKKLSAVVEGLGGKAELNRTAGEFTPLIAGGDAIWGSGSRCSLGFNVVKGGEPYFLTAGHCTESVTSWSDTQGGSEIGANEGSSFPENDYGLVKYTSDTAHPSEVNLYDGSTQAITQAGDATVGQAVTRSGSTTQVHDGEVTALDATVNYGNGDIVNGLIQTTVCAEPGDSGGALFAGDTALGLTSGGSGDCSSGGTTFFQPVPEALAAYGAEIG.

The signal sequence occupies residues 1–64; it reads MCVSRRRNSG…AGFTFQTANA (64 aa). The propeptide occupies 65-204; sequence SDDVPAFGAK…NRTAGEFTPL (140 aa). Cys-218 and Cys-238 are joined by a disulfide. Catalysis depends on charge relay system residues His-237, Asp-266, and Ser-348. Residues Cys-342 and Cys-369 are joined by a disulfide bond.

Belongs to the peptidase S1 family. Homodimer.

Its function is as follows. Has a primary specificity for large aliphatic or aromatic amino acids. This is Streptogrisin-D (sprD) from Streptomyces griseus.